A 162-amino-acid polypeptide reads, in one-letter code: Anaerobic nitrite reductase NSHB2 (162 aa).

The Globin domain occupies 16-159 (SFSEEQEALV…LVAAIKQEMK (144 aa)). The short motif at 49 to 53 (EVAPS) is the Homodimerization element. Residues Ser59, Lys73, His77, Arg100, Thr104, and His105 each coordinate heme b. The Homodimerization motif lies at 112 to 124 (DAHFEVTRFALLE).

It belongs to the plant globin family. As to quaternary structure, homodimer. It depends on heme b as a cofactor. As to expression, mainly expressed in germinating seeds, seedlings, roots, flowers and leaves.

It localises to the cytoplasm. Its subcellular location is the nucleus. It catalyses the reaction Fe(III)-heme b-[protein] + nitric oxide + H2O = Fe(II)-heme b-[protein] + nitrite + 2 H(+). In terms of biological role, phytoglobin that reduces nitrite to nitric oxide under anoxic conditions (e.g. during flooding or in waterlogged soil). May not function as an oxygen storage or transport protein. Has an unusually high affinity for O(2) through an hexacoordinate heme iron because of a very low dissociation constant. Promotes tolerance to low potassium K(+) conditions. The polypeptide is Anaerobic nitrite reductase NSHB2 (Oryza sativa subsp. indica (Rice)).